The sequence spans 904 residues: Nitrate reductase [NADH] 2 (904 aa).

2 stretches are compositionally biased toward polar residues: residues 1–10 (MAASVENRQF) and 35–50 (PSPNSTNFQKKPNSTI). Residues 1–65 (MAASVENRQF…SSEDDDDDDE (65 aa)) are disordered. Residues 56 to 65 (SSEDDDDDDE) show a composition bias toward acidic residues. Residue Cys183 participates in Mo-molybdopterin binding. Positions 531–606 (SKMYSMSEVR…LEDFRIGELI (76 aa)) constitute a Cytochrome b5 heme-binding domain. 2 residues coordinate heme: His566 and His589. Residues 647–759 (REKIPCKLID…KGPLGHIEYQ (113 aa)) enclose the FAD-binding FR-type domain. Residues 699–702 (RAYT), 716–720 (VVKIY), Phe721, Phe728, 733–735 (QMS), and Thr786 each bind FAD.

The protein belongs to the nitrate reductase family. As to quaternary structure, homodimer. FAD serves as cofactor. The cofactor is heme. Requires Mo-molybdopterin as cofactor.

The catalysed reaction is nitrite + NAD(+) + H2O = nitrate + NADH + H(+). With respect to regulation, regulated by the nitrogen source and controlled by the circadian rhythm. Nitrate reductase is a key enzyme involved in the first step of nitrate assimilation in plants, fungi and bacteria. This Nicotiana tabacum (Common tobacco) protein is Nitrate reductase [NADH] 2 (NIA2).